The chain runs to 93 residues: MKTLILLSALVLLAFQVQADPIQNTDEETKTEEQPGEEDQAVSVSFGDPEGTSLQEESLRDLVCYCRARGCKGRERMNGTCRKGHLLYMLCCR.

An N-terminal signal peptide occupies residues 1–19; sequence MKTLILLSALVLLAFQVQA. Residues 20–60 constitute a propeptide that is removed on maturation; that stretch reads DPIQNTDEETKTEEQPGEEDQAVSVSFGDPEGTSLQEESLR. The interval 23–54 is disordered; the sequence is QNTDEETKTEEQPGEEDQAVSVSFGDPEGTSL. 3 cysteine pairs are disulfide-bonded: Cys-64–Cys-92, Cys-66–Cys-81, and Cys-71–Cys-91.

Belongs to the alpha-defensin family. Paneth cells of the small bowel.

It is found in the secreted. Has broad-spectrum antimicrobial properties. Has antibacterial activity against the Gram-positive bacterium L.monocytogenes EGD and the Gram-negative bacteria E.coli ML-35p and avirulent S.typhimurium 7953, but not against the mouse-virulent S.typhimurium 14028S. Probably contributes to the antimicrobial barrier function of the small bowel mucosa. The chain is Alpha-defensin 6/12 (Defa6) from Mus musculus (Mouse).